The chain runs to 92 residues: Small ribosomal subunit protein uS19c (92 aa).

This sequence belongs to the universal ribosomal protein uS19 family.

It is found in the plastid. Its subcellular location is the chloroplast. In terms of biological role, protein S19 forms a complex with S13 that binds strongly to the 16S ribosomal RNA. The sequence is that of Small ribosomal subunit protein uS19c from Eucalyptus globulus subsp. globulus (Tasmanian blue gum).